We begin with the raw amino-acid sequence, 248 residues long: Octanoyltransferase (248 aa).

A BPL/LPL catalytic domain is found at 53-234 (ADTVDEIWIV…RLIANLDGES (182 aa)). Substrate-binding positions include 93–100 (RGGQITYH), 165–167 (ALG), and 178–180 (GLS). Residue cysteine 196 is the Acyl-thioester intermediate of the active site.

It belongs to the LipB family.

The protein resides in the cytoplasm. The enzyme catalyses octanoyl-[ACP] + L-lysyl-[protein] = N(6)-octanoyl-L-lysyl-[protein] + holo-[ACP] + H(+). It participates in protein modification; protein lipoylation via endogenous pathway; protein N(6)-(lipoyl)lysine from octanoyl-[acyl-carrier-protein]: step 1/2. Functionally, catalyzes the transfer of endogenously produced octanoic acid from octanoyl-acyl-carrier-protein onto the lipoyl domains of lipoate-dependent enzymes. Lipoyl-ACP can also act as a substrate although octanoyl-ACP is likely to be the physiological substrate. The chain is Octanoyltransferase from Burkholderia multivorans (strain ATCC 17616 / 249).